A 345-amino-acid polypeptide reads, in one-letter code: NADH-ubiquinone oxidoreductase chain 2 (345 aa).

10 helical membrane passes run 1–21 (MNPIINLILLSSMIAGTILTM), 25–45 (HWVSAWLGLELNTLAIIPIIS), 59–79 (YFLIQAASSALFLLSGITNAY), 96–116 (IMLSVALATKLGLAPIHFWLP), 123–143 (PMITALIITTWQKIAPMALLI), 148–168 (LIPPTITLIMGLLSTIIGGLG), 191–211 (ITITTITPSLALFNLTLYILL), 240–260 (TASLFLLSLLSLGGLPPLSGF), 274–294 (HLTPLALLMAITALLSLMFYL), and 324–344 (SLLSSLILLSLFLLPITPLMI).

Belongs to the complex I subunit 2 family.

It is found in the mitochondrion inner membrane. It catalyses the reaction a ubiquinone + NADH + 5 H(+)(in) = a ubiquinol + NAD(+) + 4 H(+)(out). Its function is as follows. Core subunit of the mitochondrial membrane respiratory chain NADH dehydrogenase (Complex I) that is believed to belong to the minimal assembly required for catalysis. Complex I functions in the transfer of electrons from NADH to the respiratory chain. The immediate electron acceptor for the enzyme is believed to be ubiquinone. The protein is NADH-ubiquinone oxidoreductase chain 2 (MT-ND2) of Varanus timorensis (Timor monitor).